We begin with the raw amino-acid sequence, 317 residues long: Gamma-glutamyl hydrolase (317 aa).

Positions 1-24 are cleaved as a signal peptide; it reads MASLGRLLCAWVLLLCGLASPGLS. The Gamma-glutamyl hydrolase domain occupies 25–317; that stretch reads GSYERGSKRP…SSFQQAYMFN (293 aa). 2 N-linked (GlcNAc...) asparagine glycosylation sites follow: N46 and N100. Catalysis depends on C133, which acts as the Nucleophile. N-linked (GlcNAc...) asparagine glycans are attached at residues N153, N162, N188, and N202. H243 serves as the catalytic Proton donor. N306 carries N-linked (GlcNAc...) asparagine glycosylation.

The protein belongs to the peptidase C26 family. Homodimer.

The protein localises to the secreted. It is found in the extracellular space. Its subcellular location is the lysosome. It localises to the melanosome. It carries out the reaction (6S)-5,6,7,8-tetrahydrofolyl-(gamma-L-Glu)(n) + (n-1) H2O = (6S)-5,6,7,8-tetrahydrofolate + (n-1) L-glutamate. Its activity is regulated as follows. Activity is altered by insulin and estrogen. Hydrolyzes the polyglutamate sidechains of pteroylpolyglutamates. Progressively removes gamma-glutamyl residues from pteroylpoly-gamma-glutamate to yield pteroyl-alpha-glutamate (folic acid) and free glutamate. May play an important role in the bioavailability of dietary pteroylpolyglutamates and in the metabolism of pteroylpolyglutamates and antifolates. Exhibits either endo- or exopeptidase activity depending upon the tissue of origin. When secreted, it acts primarily as an endopeptidase. The chain is Gamma-glutamyl hydrolase (Ggh) from Rattus norvegicus (Rat).